A 414-amino-acid chain; its full sequence is YYTPDYKTKDTDILAAFRMTPQPGVPAEEAGAAVAAESSTGTWTTVWTDGLTSLDRYKGRCYDIEPVAGEENQYIAYVAYPLDLFEEGSVTNLFTSIVGNVFGFKALRALRLEDLRIPPAYSKTFIGPPHGIQVERDKLNKYGRPLLGCTIKPKLGLSAKNYGRAVYECLRGGLDFTKDDENVNSQPFMRWRDRFLFVAEALFKSQAETGEIKGHYLNATAGTCEEMLKRAVFARELGAPIVMHDYLTGGFTANTSLAFYCRDNGLLLHIHRAMHAVIDRQRNHGMHFRVLAKALRMSGGDHIHAGTVVGKLEGEREVTLGFVDLLRDDYIEKDRCRGIYFTQDWVSMPGVLPVASGGIHVWHMPALTEIFGDDSVLQFGGGTLGHPWGNAPGAVANRVALEACVQARNEGPNL.

Substrate-binding residues include asparagine 100 and threonine 150. Lysine 152 functions as the Proton acceptor in the catalytic mechanism. Lysine 154 lines the substrate pocket. Residues lysine 178, aspartate 180, and glutamate 181 each coordinate Mg(2+). N6-carboxylysine is present on lysine 178. The active-site Proton acceptor is the histidine 271. Residues arginine 272, histidine 304, and serine 356 each contribute to the substrate site.

Belongs to the RuBisCO large chain family. Type I subfamily. As to quaternary structure, heterohexadecamer of 8 large chains and 8 small chains; disulfide-linked. The disulfide link is formed within the large subunit homodimers. Mg(2+) is required as a cofactor. In terms of processing, the disulfide bond which can form in the large chain dimeric partners within the hexadecamer appears to be associated with oxidative stress and protein turnover.

It is found in the plastid. It localises to the chloroplast. The catalysed reaction is 2 (2R)-3-phosphoglycerate + 2 H(+) = D-ribulose 1,5-bisphosphate + CO2 + H2O. The enzyme catalyses D-ribulose 1,5-bisphosphate + O2 = 2-phosphoglycolate + (2R)-3-phosphoglycerate + 2 H(+). RuBisCO catalyzes two reactions: the carboxylation of D-ribulose 1,5-bisphosphate, the primary event in carbon dioxide fixation, as well as the oxidative fragmentation of the pentose substrate in the photorespiration process. Both reactions occur simultaneously and in competition at the same active site. The chain is Ribulose bisphosphate carboxylase large chain (rbcL) from Blechnopsis orientalis (Fish fern).